The following is a 582-amino-acid chain: Ubiquilin-1 (582 aa).

Disordered regions lie at residues Met1–Lys26 and Arg102–Ser136. Position 2 is an N-acetylalanine (Ala2). Residues Met28–Arg102 form the Ubiquitin-like domain. The segment covering Arg102–Asn135 has biased composition (polar residues). An interaction with UBXN4 region spans residues Gln169–Pro422. STI1 domains lie at Asn173–Met201 and Asn203–Met242. Residues Asn285 to Met365 are disordered. Positions Leu290 to Arg304 are enriched in polar residues. Over residues Gln318–Thr346 the composition is skewed to low complexity. 2 consecutive STI1 domains span residues Asn381–Met428 and Leu432–Leu464. The segment at Gly481–Pro513 is disordered. Positions Arg539 to Ser579 constitute a UBA domain.

In terms of assembly, monomer and homodimer. Heterodimer with UBQLN2. Binds CD47. Binds NBL1. Binds GABRA1, GABRA2, GABRA3, GABRA6, GABRB1, GABRB2 and GABRB3. Binds UBE3A, BTRC, P4HB and MTOR. Interacts with the proteasome 19S subunit. Interacts (via ubiquitin-like domain) with TREX1; the interaction is direct and may control TREX1 subcellular location. Forms a complex with UBXN4 and VCP. Interacts (via UBA domain) with UBQLN4 (via ubiquitin-like domain). Found in a complex with UBQLN2 and MAP1LC3A/B/C. The monomeric form interacts with PSEN1 and PSEN2. Interacts with ORAI1. Interacts (via UBA domain) with TICAM1. Interacts with EPS15. Interacts (via UBA domain) with UBA52 and (via ubiquitin-like domain) with PSMD3 and PSMD4. Interacts with HERPUD1. Interacts with MAP1LC3A/B/C in the presence of UBQLN4. Interacts (via ubiquitin-like domain) with EPS15 (via UIM domains) and both the ubiquitinated and non-ubiquitinated forms can interact with EPS15. Interacts (via ubiquitin-like domain) with EPS15L1, HGS (via UIM domain) and STAM2 (via UIM domain). Interacts with BCL2L10/BCL-B; in the cytoplasm. In terms of processing, degraded during both macroautophagy and during chaperone-mediated autophagy (CMA). Phosphorylated. Post-translationally, ubiquitinated.

It localises to the nucleus. It is found in the cytoplasm. Its subcellular location is the endoplasmic reticulum. The protein localises to the cytoplasmic vesicle. The protein resides in the autophagosome. It localises to the cell membrane. Functionally, plays an important role in the regulation of different protein degradation mechanisms and pathways including ubiquitin-proteasome system (UPS), autophagy and endoplasmic reticulum-associated protein degradation (ERAD) pathway. Mediates the proteasomal targeting of misfolded or accumulated proteins for degradation by binding (via UBA domain) to their polyubiquitin chains and by interacting (via ubiquitin-like domain) with the subunits of the proteasome. Plays a role in the ERAD pathway via its interaction with ER-localized proteins UBXN4, VCP and HERPUD1 and may form a link between the polyubiquitinated ERAD substrates and the proteasome. Plays a role in unfolded protein response (UPR) by attenuating the induction of UPR-inducible genes, DDTI3/CHOP, HSPA5 and PDIA2 during ER stress. Involved in the regulation of macroautophagy and autophagosome formation; required for maturation of autophagy-related protein LC3 from the cytosolic form LC3-I to the membrane-bound form LC3-II and may assist in the maturation of autophagosomes to autolysosomes by mediating autophagosome-lysosome fusion. Negatively regulates the TICAM1/TRIF-dependent toll-like receptor signaling pathway by decreasing the abundance of TICAM1 via the autophagic pathway. Promotes the ubiquitination and lysosomal degradation of ORAI1, consequently down-regulating the ORAI1-mediated Ca2+ mobilization. Suppresses the maturation and proteasomal degradation of amyloid beta A4 protein (A4) by stimulating the lysine 63 (K63)-linked polyubiquitination. Delays the maturation of A4 by sequestering it in the Golgi apparatus and preventing its transport to the cell surface for subsequent processing. Promotes the surface expression of GABA-A receptors. Ubiquitinates BCL2L10 and thereby stabilizes protein abundance. In Rattus norvegicus (Rat), this protein is Ubiquilin-1 (Ubqln1).